Consider the following 399-residue polypeptide: Elongation factor Tu (399 aa).

Residues 10 to 204 enclose the tr-type G domain; it reads KPHVNIGTIG…AVDASIPEPE (195 aa). A G1 region spans residues 19-26; sequence GHVDHGKT. Residue 19–26 participates in GTP binding; that stretch reads GHVDHGKT. T26 is a Mg(2+) binding site. The segment at 60–64 is G2; sequence GITIN. The tract at residues 81-84 is G3; that stretch reads DCPG. GTP is bound by residues 81–85 and 136–139; these read DCPGH and NKCD. A G4 region spans residues 136–139; that stretch reads NKCD. Residues 174–176 are G5; the sequence is SGL.

The protein belongs to the TRAFAC class translation factor GTPase superfamily. Classic translation factor GTPase family. EF-Tu/EF-1A subfamily. As to quaternary structure, monomer.

The protein resides in the cytoplasm. The catalysed reaction is GTP + H2O = GDP + phosphate + H(+). Its function is as follows. GTP hydrolase that promotes the GTP-dependent binding of aminoacyl-tRNA to the A-site of ribosomes during protein biosynthesis. This Prochlorococcus marinus (strain MIT 9515) protein is Elongation factor Tu.